The primary structure comprises 506 residues: U3 small nucleolar RNA-associated protein 18 homolog (506 aa).

Residues Met-1–Glu-11 are compositionally biased toward acidic residues. Disordered regions lie at residues Met-1–Lys-44 and Ala-69–His-126. Residues Glu-24–Ile-37 are compositionally biased toward basic and acidic residues. Residues Ser-102, Ser-104, Ser-164, and Ser-165 each carry the phosphoserine modification. 4 WD repeats span residues Tyr-203–Leu-242, Lys-331–Ile-370, Met-372–Ala-413, and Glu-469–Gly-505.

It belongs to the WD repeat UTP18 family. In terms of assembly, component of U3 snoRNP complex.

It localises to the nucleus. The protein localises to the nucleolus. Its function is as follows. Component of a nucleolar small nuclear ribonucleoprotein particle (snoRNP) thought to participate in the processing and modification of pre-ribosomal RNA. Regulation of cell size by ribosome synthesis is an important parameter for stem cell maintenance and function. In Drosophila melanogaster (Fruit fly), this protein is U3 small nucleolar RNA-associated protein 18 homolog (wcd).